A 714-amino-acid chain; its full sequence is Fatty acid oxidation complex subunit alpha (714 aa).

The enoyl-CoA hydratase stretch occupies residues 1-190 (MDTVSAFKLE…KAGLVDEVVP (190 aa)). The interval 306-714 (GSLRSVAVLG…TFWPADERLT (409 aa)) is 3-hydroxyacyl-CoA dehydrogenase.

In the N-terminal section; belongs to the enoyl-CoA hydratase/isomerase family. The protein in the central section; belongs to the 3-hydroxyacyl-CoA dehydrogenase family. In terms of assembly, heterotetramer of two alpha chains (FadJ) and two beta chains (FadI).

It is found in the cytoplasm. It catalyses the reaction a (3S)-3-hydroxyacyl-CoA = a (2E)-enoyl-CoA + H2O. It carries out the reaction a 4-saturated-(3S)-3-hydroxyacyl-CoA = a (3E)-enoyl-CoA + H2O. The enzyme catalyses a (3S)-3-hydroxyacyl-CoA + NAD(+) = a 3-oxoacyl-CoA + NADH + H(+). The catalysed reaction is (3S)-3-hydroxybutanoyl-CoA = (3R)-3-hydroxybutanoyl-CoA. It functions in the pathway lipid metabolism; fatty acid beta-oxidation. Functionally, catalyzes the formation of a hydroxyacyl-CoA by addition of water on enoyl-CoA. Also exhibits 3-hydroxyacyl-CoA epimerase and 3-hydroxyacyl-CoA dehydrogenase activities. In Klebsiella pneumoniae subsp. pneumoniae (strain ATCC 700721 / MGH 78578), this protein is Fatty acid oxidation complex subunit alpha.